We begin with the raw amino-acid sequence, 882 residues long: Translation initiation factor IF-2 (882 aa).

Residues 50–299 (SFKSANTTKP…KERPLPETLV (250 aa)) are disordered. Basic and acidic residues-rich tracts occupy residues 60–71 (STEKDSKNSSRK) and 84–96 (RRRD…DNRH). Positions 97–108 (GNNKRRNNKFKK) are enriched in basic residues. Composition is skewed to basic and acidic residues over residues 109–133 (QQND…DLLN), 169–183 (KKVE…EKLE), 232–242 (QKEETKPTRKK), and 250–263 (EVPD…EHSD). The span at 264 to 277 (KARRRRNKKNKRIN) shows a compositional bias: basic residues. Residues 278-294 (QSKEIKKQPTQRKERPL) are compositionally biased toward basic and acidic residues. The 170-residue stretch at 383–552 (KRPPVVTIMG…LLQADVMELK (170 aa)) folds into the tr-type G domain. The segment at 392 to 399 (GHVDHGKT) is G1. 392-399 (GHVDHGKT) lines the GTP pocket. A G2 region spans residues 417-421 (GITQK). Residues 438-441 (DTPG) are G3. GTP contacts are provided by residues 438–442 (DTPGH) and 492–495 (NKID). Residues 492–495 (NKID) form a G4 region. The tract at residues 528 to 530 (SAK) is G5.

Belongs to the TRAFAC class translation factor GTPase superfamily. Classic translation factor GTPase family. IF-2 subfamily.

The protein localises to the cytoplasm. Functionally, one of the essential components for the initiation of protein synthesis. Protects formylmethionyl-tRNA from spontaneous hydrolysis and promotes its binding to the 30S ribosomal subunits. Also involved in the hydrolysis of GTP during the formation of the 70S ribosomal complex. The polypeptide is Translation initiation factor IF-2 (Lactobacillus gasseri (strain ATCC 33323 / DSM 20243 / BCRC 14619 / CIP 102991 / JCM 1131 / KCTC 3163 / NCIMB 11718 / NCTC 13722 / AM63)).